Consider the following 192-residue polypeptide: Superoxide dismutase [Fe] (192 aa).

Residues histidine 27, histidine 74, aspartate 157, and histidine 161 each contribute to the Fe cation site.

It belongs to the iron/manganese superoxide dismutase family. As to quaternary structure, homodimer. Fe cation is required as a cofactor.

It catalyses the reaction 2 superoxide + 2 H(+) = H2O2 + O2. Destroys superoxide anion radicals which are normally produced within the cells and which are toxic to biological systems. The sequence is that of Superoxide dismutase [Fe] (sodB) from Bordetella pertussis (strain Tohama I / ATCC BAA-589 / NCTC 13251).